Reading from the N-terminus, the 430-residue chain is Retinoic acid receptor RXR-alpha-A (430 aa).

Residues 1–20 show a composition bias toward low complexity; sequence MHPSLLSPTSLGPSGSLHSP. 2 disordered regions span residues 1 to 25 and 48 to 73; these read MHPS…STLS and ASPG…SSSE. Residues 1–99 form a modulating region; that stretch reads MHPSLLSPTS…QPSGTPLSLT (99 aa). Polar residues predominate over residues 58-72; it reads ISPQLNSHMNSVSSS. Residues 100–175 constitute a DNA-binding region (nuclear receptor); sequence KHICAICGDR…MGMKREAVQE (76 aa). Residues C103, C106, C120, and C123 each coordinate Zn(2+). The segment at 103-123 adopts an NR C4-type zinc-finger fold; the sequence is CAICGDRSSGKHYGVYSCEGC. Residues 128-133 form a nuclear localization signal region; sequence KRTVRK. Zn(2+) contacts are provided by C139, C145, C155, and C158. The NR C4-type zinc-finger motif lies at 139–158; sequence CRDNKDCVIDKRQRNRCQYC. A compositionally biased stretch (basic and acidic residues) spans 174 to 186; it reads QEERQRAKERSEN. Residues 174 to 196 are disordered; that stretch reads QEERQRAKERSENEVESTSSANE. The hinge stretch occupies residues 176–192; that stretch reads ERQRAKERSENEVESTS. An NR LBD domain is found at 195-426; sequence NEDMPVEKIL…TFLMEMLEAP (232 aa). 9-cis-retinoate contacts are provided by R284 and A295. Residues R284 and A295 each contribute to the all-trans-retinoate site. The required for nuclear export stretch occupies residues 316 to 336; the sequence is RVLTELVSKMRDMQMDKTELG. The segment at 415 to 426 is AF-2; that stretch reads IDTFLMEMLEAP.

This sequence belongs to the nuclear hormone receptor family. NR2 subfamily. As to quaternary structure, homodimer. Heterodimer; with a rar molecule. Binds DNA preferentially as a rar/rxr heterodimer.

It localises to the nucleus. In terms of biological role, receptor for retinoic acid that acts as a transcription factor. Forms homo- or heterodimers with retinoic acid receptors (rars) and binds to target response elements in response to their ligands, all-trans or 9-cis retinoic acid, to regulate gene expression in various biological processes. The rar/rxr heterodimers bind to the retinoic acid response elements (RARE) composed of tandem 5'-AGGTCA-3' sites known as DR1-DR5 to regulate transcription. The high affinity ligand for rxrs is 9-cis retinoic acid. In the absence of ligand, the rar/rxr heterodimers associate with a multiprotein complex containing transcription corepressors that induce histone deacetylation, chromatin condensation and transcriptional suppression. On ligand binding, the corepressors dissociate from the receptors and coactivators are recruited leading to transcriptional activation. In Danio rerio (Zebrafish), this protein is Retinoic acid receptor RXR-alpha-A.